The sequence spans 195 residues: Imidazoleglycerol-phosphate dehydratase (195 aa).

Belongs to the imidazoleglycerol-phosphate dehydratase family.

The protein resides in the cytoplasm. The catalysed reaction is D-erythro-1-(imidazol-4-yl)glycerol 3-phosphate = 3-(imidazol-4-yl)-2-oxopropyl phosphate + H2O. The protein operates within amino-acid biosynthesis; L-histidine biosynthesis; L-histidine from 5-phospho-alpha-D-ribose 1-diphosphate: step 6/9. The polypeptide is Imidazoleglycerol-phosphate dehydratase (Polynucleobacter necessarius subsp. necessarius (strain STIR1)).